A 210-amino-acid polypeptide reads, in one-letter code: Ribosomal RNA large subunit methyltransferase E (210 aa).

Residues glycine 60, tryptophan 62, aspartate 85, aspartate 101, and aspartate 126 each contribute to the S-adenosyl-L-methionine site. Residue lysine 166 is the Proton acceptor of the active site.

This sequence belongs to the class I-like SAM-binding methyltransferase superfamily. RNA methyltransferase RlmE family.

Its subcellular location is the cytoplasm. The catalysed reaction is uridine(2552) in 23S rRNA + S-adenosyl-L-methionine = 2'-O-methyluridine(2552) in 23S rRNA + S-adenosyl-L-homocysteine + H(+). Functionally, specifically methylates the uridine in position 2552 of 23S rRNA at the 2'-O position of the ribose in the fully assembled 50S ribosomal subunit. This Bordetella pertussis (strain Tohama I / ATCC BAA-589 / NCTC 13251) protein is Ribosomal RNA large subunit methyltransferase E.